A 101-amino-acid polypeptide reads, in one-letter code: Small ribosomal subunit protein bS18c (101 aa).

This sequence belongs to the bacterial ribosomal protein bS18 family. As to quaternary structure, part of the 30S ribosomal subunit.

The protein localises to the plastid. It localises to the chloroplast. The polypeptide is Small ribosomal subunit protein bS18c (Guizotia abyssinica (Niger)).